The chain runs to 347 residues: NADH-ubiquinone oxidoreductase chain 2 (347 aa).

The next 11 helical transmembrane spans lie at Met1 to Leu21, His25 to Met45, Met68 to Ile88, Met96 to Pro116, Val122 to Leu142, Ile145 to Gly165, Ile178 to Pro198, Ser201 to Ile221, Ile239 to Gly259, Ser274 to Met294, and Met326 to Leu346.

This sequence belongs to the complex I subunit 2 family. Core subunit of respiratory chain NADH dehydrogenase (Complex I) which is composed of 45 different subunits. Interacts with TMEM242.

It localises to the mitochondrion inner membrane. It carries out the reaction a ubiquinone + NADH + 5 H(+)(in) = a ubiquinol + NAD(+) + 4 H(+)(out). Its function is as follows. Core subunit of the mitochondrial membrane respiratory chain NADH dehydrogenase (Complex I) which catalyzes electron transfer from NADH through the respiratory chain, using ubiquinone as an electron acceptor. Essential for the catalytic activity and assembly of complex I. The polypeptide is NADH-ubiquinone oxidoreductase chain 2 (Sylvisorex lunaris (Moon forest shrew)).